A 141-amino-acid polypeptide reads, in one-letter code: Putative pre-16S rRNA nuclease (141 aa).

This sequence belongs to the YqgF nuclease family.

It is found in the cytoplasm. In terms of biological role, could be a nuclease involved in processing of the 5'-end of pre-16S rRNA. The protein is Putative pre-16S rRNA nuclease of Clostridioides difficile (strain 630) (Peptoclostridium difficile).